The primary structure comprises 342 residues: MACEPPTDPGGAAGPLPTSTLGCNILPQGNPPGWGQELHNGQVLTVLRIDNTCAPISFDLGAAEEQLQAWGIQVPAEQYRNLAESALLEPQVRRYIIYNSRPMRLAFAVVFYVLVWANIYSTSQMFALGNQWAGVLLATLAAFSLTLTLVLVFERQQRKANTNTDLRLVAANGALLRHRVLLGVTDTVEGCQSVIQLWFVYFDLENCVQFLSDHVQEMKRSQESLLRSRLSQLCVVMETGVSPVVEGPEDLEDAPLLPSTPGPQERPLTQTELYQLVPEAEPEEMARQLLAVFGGYYTRLLVTSRLPQSMGTRHMDSARIPCPCQLIEVHVLGTGCCPFLAR.

A run of 2 helical transmembrane segments spans residues 106-126 (AFAV…SQMF) and 133-153 (AGVL…VLVF). The disordered stretch occupies residues 245 to 267 (VEGPEDLEDAPLLPSTPGPQERP).

In terms of assembly, interacts with ITGAM; this interaction inhibits ITGAM degradation via the endosome-lysosome pathway. Interacts with ITGB4; this interaction prevents ITGB4 degradation.

Its subcellular location is the cell membrane. Its function is as follows. Stabilizes cell surface expression of ITGAM and participates in the adhesion and migration of phagocytes during bacterial clearance. This chain is Transmembrane protein 268, found in Mus musculus (Mouse).